Reading from the N-terminus, the 481-residue chain is Glutamyl-tRNA(Gln) amidotransferase subunit A (481 aa).

Active-site charge relay system residues include Lys-74 and Ser-149. Ser-173 functions as the Acyl-ester intermediate in the catalytic mechanism.

The protein belongs to the amidase family. GatA subfamily. In terms of assembly, heterotrimer of A, B and C subunits.

The catalysed reaction is L-glutamyl-tRNA(Gln) + L-glutamine + ATP + H2O = L-glutaminyl-tRNA(Gln) + L-glutamate + ADP + phosphate + H(+). Functionally, allows the formation of correctly charged Gln-tRNA(Gln) through the transamidation of misacylated Glu-tRNA(Gln) in organisms which lack glutaminyl-tRNA synthetase. The reaction takes place in the presence of glutamine and ATP through an activated gamma-phospho-Glu-tRNA(Gln). The chain is Glutamyl-tRNA(Gln) amidotransferase subunit A from Francisella tularensis subsp. mediasiatica (strain FSC147).